A 254-amino-acid chain; its full sequence is Bacteriorhodopsin-I (254 aa).

Residues 1–6 constitute a propeptide that is removed on maturation; it reads MSQLAL. Q7 is subject to Pyrrolidone carboxylic acid. The next 7 membrane-spanning stretches (helical) occupy residues 16-36, 51-71, 91-111, 116-136, 144-164, 185-205, and 212-232; these read EGIWLALGTIGMLLGMLYFIA, VITILIPAIAAASYLSMFFGF, YADWLFTTPLLLLDIGLLAGA, IGALVGIDAFMIVTGLVATLT, AFWTISTISMVFLLYYLVAVF, IILVTWAIYPVAWLVGTEGLA, and ETLLFMVLDLVAKVGFGFILL. K224 is modified (N6-(retinylidene)lysine).

It belongs to the archaeal/bacterial/fungal opsin family. The covalent binding of retinal to the apoprotein, bacterioopsin, generates bacteriorhodopsin.

It localises to the cell membrane. Its function is as follows. Light-driven proton pump. The protein is Bacteriorhodopsin-I (bop1) of Haloquadratum walsbyi (strain DSM 16854 / JCM 12705 / C23).